The primary structure comprises 147 residues: MKPRHKRAAIIAGGLAALGIAAYLVLNAFQSNLVFFFSPTQVFAGEAPKNRAFRIGGLVKEGTVKRDNLTVAFVVTDTAKEVPVSYTGILPDLFKEGKGVVAQGKLDENGHFTATEVLAKHDENYMPPEAKAALDQAQIQKTIKSLK.

Over 1 to 7 the chain is Cytoplasmic; it reads MKPRHKR. The helical; Signal-anchor for type II membrane protein transmembrane segment at 8 to 28 threads the bilayer; it reads AAIIAGGLAALGIAAYLVLNA. The Periplasmic portion of the chain corresponds to 29 to 147; that stretch reads FQSNLVFFFS…QIQKTIKSLK (119 aa). 2 residues coordinate heme: His-121 and Tyr-125.

The protein belongs to the CcmE/CycJ family.

It is found in the cell inner membrane. In terms of biological role, heme chaperone required for the biogenesis of c-type cytochromes. Transiently binds heme delivered by CcmC and transfers the heme to apo-cytochromes in a process facilitated by CcmF and CcmH. This chain is Cytochrome c-type biogenesis protein CcmE, found in Albidiferax ferrireducens (strain ATCC BAA-621 / DSM 15236 / T118) (Rhodoferax ferrireducens).